Reading from the N-terminus, the 716-residue chain is FLYWCH-type zinc finger-containing protein 1 (716 aa).

The segment at M1–K35 is disordered. Residue S21 is modified to Phosphoserine. The FLYWCH-type 1 zinc-finger motif lies at F116–H174. Residue K134 forms a Glycyl lysine isopeptide (Lys-Gly) (interchain with G-Cter in SUMO2) linkage. Residues P191–T231 form a disordered region. Low complexity predominate over residues L195 to G204. A Phosphoserine modification is found at S261. The segment at F273–H331 adopts an FLYWCH-type 2 zinc-finger fold. S371 is modified (phosphoserine). The tract at residues G377 to F421 is disordered. A Glycyl lysine isopeptide (Lys-Gly) (interchain with G-Cter in SUMO2) cross-link involves residue K393. Residues F421–H479 form an FLYWCH-type 3 zinc finger. A Phosphoserine modification is found at S503. The FLYWCH-type 4 zinc-finger motif lies at F509–H567. Phosphoserine is present on S591. The FLYWCH-type 5 zinc finger occupies F600 to H658. K685 is covalently cross-linked (Glycyl lysine isopeptide (Lys-Gly) (interchain with G-Cter in SUMO2)). At S696 the chain carries Phosphoserine.

In terms of assembly, interacts with CTNNB1 (when unphosphorylated), perhaps preventing interaction of CTNNB1 with TCF4, and thereby regulating transcription activation; phosphorylation of CTNNB1 may inhibit the interaction.

The protein resides in the nucleus. It is found in the chromosome. The protein localises to the centromere. Transcription cofactor. Negatively regulates transcription activation by catenin beta-1 CTNNB1, perhaps acting by competing with TCF4 for CTNNB1 binding. May play a role in DNA-damage response signaling. Binds specifically to DNA sequences at peri-centromeric chromatin loci. This chain is FLYWCH-type zinc finger-containing protein 1 (FLYWCH1), found in Homo sapiens (Human).